Here is a 215-residue protein sequence, read N- to C-terminus: Protein C' (215 aa).

Residues 12–34 (MPSFLKKILKLRGRRQEDESRSR) are disordered. Positions 15–22 (FLKKILKL) are involved in self-degradation and in host STAT1 degradation.

This sequence belongs to the respirovirus protein C family. As to quaternary structure, the different isoforms interact (via C-terminus) with unphosphorylated and phosphorylated human STAT1 (via N-terminus), favoring the formation of parallel STAT1 homodimers. The different isoforms do not interact with host STAT2. C protein interacts with L protein; this interaction has an inhibitory effect on viral transcription and replication. In terms of processing, protein Y2 is produced not only by alternative initiation, but also by proteolytic cleavage of C'. Only alternative initiation is detected in vitro, whereas in vivo cleavage seems to be predominant.

Its subcellular location is the host cytoplasm. In terms of biological role, the different products prevent the establishment of cellular antiviral state by blocking the interferon-alpha/beta (IFN-alpha/beta) and IFN-gamma signaling pathways. They inhibit IFN-alpha/beta induced tyrosine phosphorylation of STAT1 and STAT2. Blocking the IFN-alpha/beta pathway requires binding to STAT1 in the cytoplasm. They inhibit IFN-gamma induced serine phosphorylation of STAT1. Block the IFN-gamma pathway by binding to and stabilizing the parallel form of the STAT1 dimer, further inducing high-molecular-weight complex formation and inhibition of transcription by IFN-gamma. May also have a role in preventing the cell to enter apoptosis. Modulate regulation of viral transcription and replication. Overexpression inhibits the viral RNA polymerase. The absence of all C', C and Y2 proteins leads to viral delayed growth. Plays an important role in virion particles release. Modulates virion shape. This is Protein C' (P/V/C) from Cavia cutleri (Guinea pig).